Reading from the N-terminus, the 243-residue chain is DUF724 domain-containing protein 5 (243 aa).

Residues 1-24 (MREKHYSEDNSRKRKRGELEHNSD) show a composition bias toward basic and acidic residues. Positions 1–51 (MREKHYSEDNSRKRKRGELEHNSDLNETVLPSDWTPDPVKNFAADDDDEET) are disordered. The 185-residue stretch at 59–243 (VLPFVKKSPV…DLGVELEDVE (185 aa)) folds into the DUF724 domain. Residues 174–223 (KEMKDESSKKHKAEQEFGEMERKILEVKNKVLELQKQEAALEKQKDATYE) adopt a coiled-coil conformation.

In terms of assembly, homodimer. Expressed in leaves, flowers and siliques.

It localises to the nucleus. In terms of biological role, may be involved in the polar growth of plant cells via transportation of RNAs. The protein is DUF724 domain-containing protein 5 of Arabidopsis thaliana (Mouse-ear cress).